A 142-amino-acid chain; its full sequence is Hemoglobin subunit alpha (142 aa).

In terms of domain architecture, Globin spans 2–142; it reads VLSPADKTNI…VSTVLTSKYR (141 aa). Serine 4 is subject to Phosphoserine. Residue lysine 8 is modified to N6-succinyllysine. Threonine 9 carries the phosphothreonine modification. Lysine 12 is modified (N6-succinyllysine). Position 17 is an N6-acetyllysine; alternate (lysine 17). The residue at position 17 (lysine 17) is an N6-succinyllysine; alternate. Tyrosine 25 is modified (phosphotyrosine). The residue at position 36 (serine 36) is a Phosphoserine. At lysine 41 the chain carries N6-succinyllysine. Serine 50 is modified (phosphoserine). Histidine 59 is an O2 binding site. A heme b-binding site is contributed by histidine 88. At serine 103 the chain carries Phosphoserine. Threonine 109 carries the post-translational modification Phosphothreonine. Serine 125 bears the Phosphoserine mark. 2 positions are modified to phosphothreonine: threonine 135 and threonine 138. The residue at position 139 (serine 139) is a Phosphoserine.

The protein belongs to the globin family. Heterotetramer of two alpha chains and two beta chains. In terms of tissue distribution, red blood cells.

In terms of biological role, involved in oxygen transport from the lung to the various peripheral tissues. Functionally, hemopressin acts as an antagonist peptide of the cannabinoid receptor CNR1. Hemopressin-binding efficiently blocks cannabinoid receptor CNR1 and subsequent signaling. The chain is Hemoglobin subunit alpha (HBA) from Canis latrans (Coyote).